Consider the following 608-residue polypeptide: 1-deoxy-D-xylulose-5-phosphate synthase (608 aa).

Thiamine diphosphate contacts are provided by residues histidine 66 and 107-109 (GHA). Aspartate 138 provides a ligand contact to Mg(2+). Thiamine diphosphate contacts are provided by residues 139 to 140 (GA), asparagine 167, phenylalanine 277, and glutamate 350. Asparagine 167 contributes to the Mg(2+) binding site.

Belongs to the transketolase family. DXPS subfamily. As to quaternary structure, homodimer. Mg(2+) serves as cofactor. The cofactor is thiamine diphosphate.

It catalyses the reaction D-glyceraldehyde 3-phosphate + pyruvate + H(+) = 1-deoxy-D-xylulose 5-phosphate + CO2. It participates in metabolic intermediate biosynthesis; 1-deoxy-D-xylulose 5-phosphate biosynthesis; 1-deoxy-D-xylulose 5-phosphate from D-glyceraldehyde 3-phosphate and pyruvate: step 1/1. Functionally, catalyzes the acyloin condensation reaction between C atoms 2 and 3 of pyruvate and glyceraldehyde 3-phosphate to yield 1-deoxy-D-xylulose-5-phosphate (DXP). The sequence is that of 1-deoxy-D-xylulose-5-phosphate synthase from Thermotoga petrophila (strain ATCC BAA-488 / DSM 13995 / JCM 10881 / RKU-1).